The sequence spans 437 residues: Enolase (437 aa).

Gln162 is a (2R)-2-phosphoglycerate binding site. Glu204 serves as the catalytic Proton donor. Asp251, Glu297, and Asp324 together coordinate Mg(2+). Lys349, Arg378, Ser379, and Lys400 together coordinate (2R)-2-phosphoglycerate. Lys349 acts as the Proton acceptor in catalysis.

This sequence belongs to the enolase family. Requires Mg(2+) as cofactor.

It localises to the cytoplasm. Its subcellular location is the secreted. The protein localises to the cell surface. It catalyses the reaction (2R)-2-phosphoglycerate = phosphoenolpyruvate + H2O. It participates in carbohydrate degradation; glycolysis; pyruvate from D-glyceraldehyde 3-phosphate: step 4/5. Functionally, catalyzes the reversible conversion of 2-phosphoglycerate (2-PG) into phosphoenolpyruvate (PEP). It is essential for the degradation of carbohydrates via glycolysis. The sequence is that of Enolase from Chlorobaculum parvum (strain DSM 263 / NCIMB 8327) (Chlorobium vibrioforme subsp. thiosulfatophilum).